Here is a 682-residue protein sequence, read N- to C-terminus: Connectin (682 aa).

Positions 1-24 (MATLADSAICFLLLSLLLIGACLV) are cleaved as a signal peptide. The tract at residues 29 to 54 (GRAKDDRRTRGRGSSSGVLSSSSSSS) is disordered. The segment covering 40-54 (RGSSSGVLSSSSSSS) has biased composition (low complexity). LRR repeat units follow at residues 149–172 (LRELKFVIQNNARLDYIPTMIIEP), 173–196 (LKNLSSIVIEYSQVEIVKSYAFAN), 199–220 (FLERIILNNNHIMALDQDAFAN), 223–244 (RLRELNLEHNQIFEMDRYAFRN), 247–268 (LCERLFLNNNNISTLHEGLFAD), 271–292 (RLTFLNLAHNQINVLTSEIFRG), 295–316 (NLNVLKLTRNNLNFIGDTVFAE), 319–342 (SLSELELDDNRIERISERALDGLN), 343–364 (TLKTLNLRNNLLKKIDNGLLRG), 367–388 (ALLSINVQANKLETLTFYTFQP), and 389–404 (IMDNLVNSTSELLVSD). The LRRCT domain maps to 405–462 (NKFICDCRLQWIFELKNRTRHLQLRDSLEDLHCTLQEPKLSHFVDPVPPTILDVLNIG). A disordered region spans residues 503–536 (RQALRGQRQFASSAENVVESKMRRRRKRQEEVKE). A lipid anchor (GPI-anchor amidated alanine) is attached at alanine 658. Positions 659 to 682 (GANSLAQGMTIIVSLVALMMISRG) are cleaved as a propeptide — removed in mature form.

In terms of tissue distribution, predominantly expressed in abdominal and thoracic segment muscle and motorneuron cells.

The protein localises to the cell membrane. In terms of biological role, cell adhesion protein involved in target recognition during neuromuscular development. Mediates homophilic cellular adhesion. The sequence is that of Connectin (Con) from Drosophila melanogaster (Fruit fly).